The primary structure comprises 432 residues: Phosphomethylpyrimidine synthase (432 aa).

Residues asparagine 66, methionine 95, tyrosine 124, histidine 163, 185-187 (SRG), 226-229 (DGLR), and glutamate 265 contribute to the substrate site. Histidine 269 serves as a coordination point for Zn(2+). A substrate-binding site is contributed by tyrosine 292. Histidine 333 provides a ligand contact to Zn(2+). Positions 409, 412, and 416 each coordinate [4Fe-4S] cluster.

The protein belongs to the ThiC family. It depends on [4Fe-4S] cluster as a cofactor.

The enzyme catalyses 5-amino-1-(5-phospho-beta-D-ribosyl)imidazole + S-adenosyl-L-methionine = 4-amino-2-methyl-5-(phosphooxymethyl)pyrimidine + CO + 5'-deoxyadenosine + formate + L-methionine + 3 H(+). It participates in cofactor biosynthesis; thiamine diphosphate biosynthesis. Its function is as follows. Catalyzes the synthesis of the hydroxymethylpyrimidine phosphate (HMP-P) moiety of thiamine from aminoimidazole ribotide (AIR) in a radical S-adenosyl-L-methionine (SAM)-dependent reaction. The sequence is that of Phosphomethylpyrimidine synthase from Caldanaerobacter subterraneus subsp. tengcongensis (strain DSM 15242 / JCM 11007 / NBRC 100824 / MB4) (Thermoanaerobacter tengcongensis).